The primary structure comprises 697 residues: Portal protein (697 aa).

The tract at residues M633 to H697 is disordered. The segment covering I664 to R689 has biased composition (basic and acidic residues).

It belongs to the herpesviridae portal protein family. As to quaternary structure, homododecamerizes. Interacts with terminase subunits TRM1 and TRM3.

Its subcellular location is the virion. It localises to the host nucleus. In terms of biological role, forms a portal in the viral capsid through which viral DNA is translocated during DNA packaging. Assembles as a dodecamer at a single fivefold axe of the T=16 icosahedric capsid. Binds to the molecular motor that translocates the viral DNA, termed terminase. This chain is Portal protein (UL104), found in Homo sapiens (Human).